Consider the following 1150-residue polypeptide: Solute carrier family 12 member 6 (1150 aa).

Residues 1–108 (MHPPEATTKM…GEHSQLLDDG (108 aa)) form a disordered region. Over 1-135 (MHPPEATTKM…DEYFDKNLAL (135 aa)) the chain is Cytoplasmic. Over residues 28-45 (LSDTSPDLSSRSSSRVRF) the composition is skewed to low complexity. Ser32 bears the Phosphoserine mark. Polar residues predominate over residues 80–101 (DRTSNPQDVTEDPSQNSITGEH). Ser120 carries the phosphoserine modification. The chain crosses the membrane as a discontinuously helical span at residues 136–158 (FEEEMDTRPKVSSLLNRMANYTN). The K(+) site is built by Ser147 and Ser148. Ser148 bears the Phosphoserine mark. Asn151 provides a ligand contact to chloride. At 159–165 (LTQGAKE) the chain is on the extracellular side. Residues 161–181 (QGAKEHEEAENITEGKKKPTK) are disordered. The span at 163 to 177 (AKEHEEAENITEGKK) shows a compositional bias: basic and acidic residues. The helical transmembrane segment at 166-188 (HEEAENITEGKKKPTKSPQMGTF) threads the bilayer. Over 189–211 (MGVYLPCLQNIFGVILFLRLTWV) the chain is Cytoplasmic. A helical membrane pass occupies residues 212–245 (VGTAGILQAFAIVLICCCCTMLTAISMSAIATNG). Over 246-263 (VVPAGGSYFMISRALGPE) the chain is Extracellular. The next 2 membrane-spanning stretches (helical) occupy residues 264 to 287 (FGGA…ILGA) and 288 to 316 (IEIF…AMLN). Tyr283 is a binding site for K(+). Residues 317–433 (NMRVYGTAFL…FVHNNVISIQ (117 aa)) lie on the Extracellular side of the membrane. An intrachain disulfide couples Cys375 to Cys390. N-linked (GlcNAc...) asparagine glycans are attached at residues Asn379, Asn398, Asn411, and Asn417. Cys410 and Cys420 are oxidised to a cystine. The helical transmembrane segment at 434 to 454 (GIPGLASGIITENLWSNYLPK) threads the bilayer. The K(+) site is built by Ile443, Thr444, and Asn446. Chloride contacts are provided by Ile443 and Thr444. Residues Leu447 and Trp448 each contribute to the chloride site. Topologically, residues 455–464 (GEIIEKPSAK) are cytoplasmic. The helical transmembrane segment at 465–487 (SSDVLGNLNHEYVLADITTSFTL) threads the bilayer. Residues 488-518 (LVGIFFPSVTGIMAGSNRSGDLKDAQKSIPI) lie on the Extracellular side of the membrane. Position 497 (Thr497) interacts with K(+). Residues 519–545 (GTILAILTTSFVYLSNVVLFGACIEGV) form a helical membrane-spanning segment. Topologically, residues 546-568 (VLRDKFGDAVKGNLVVGTLSWPS) are cytoplasmic. A run of 2 helical transmembrane segments spans residues 569–589 (PWVI…QSLT) and 590–612 (GAPR…VFGH). A chloride-binding site is contributed by Ile603. Residues 613 to 629 (SKANGEPTWALLLTAAI) are Cytoplasmic-facing. A run of 2 helical transmembrane segments spans residues 630 to 649 (AELG…LSMF) and 650 to 665 (FLMC…ALQT). Tyr654 contacts chloride. Over 666-1150 (LLRTPNWRPR…GGSEVITIYS (485 aa)) the chain is Cytoplasmic. Residues 682 to 691 (ALSFMGMSIC) form a scissor helix region. Phosphoserine is present on Ser736. At Thr778 the chain carries Phosphothreonine. Ser981 is subject to Phosphoserine. Thr991 is modified (phosphothreonine). 3 positions are modified to phosphoserine: Ser1023, Ser1029, and Ser1032. At Thr1048 the chain carries Phosphothreonine. Tyr1121 carries the post-translational modification Phosphotyrosine.

It belongs to the SLC12A transporter family. K/Cl co-transporter subfamily. In terms of assembly, homodimer; adopts a domain-swap conformation at the scissor helices connecting the transmembrane domain and C-terminal domain. Heterodimer with K-Cl cotransporter SLC12A5. Interacts (via C-terminus) with CKB; the interaction may be required for potassium-chloride cotransport activity. Post-translationally, phosphorylated, phosphorylation regulates transporter activity. Phosphorylated at Thr-991 and Thr-1048 by OXSR1/OSR1 and STK39/SPAK downstream of WNK kinases (WNK1, WNK2, WNK3 or WNK4), inhibiting the potassium-chloride cotransport activity. In terms of processing, N-glycosylated. In terms of tissue distribution, expressed in hippocampus and corpus callosum (at protein level). Highly expressed throughout the brain and detected at lower levels in kidney. Highly expressed in highly myelinated white matter of the brain, but not in gray matter. Detected in the corpus callosum, in packed cell layers of the hippocampus and in Purkinje neurons within the cerebellum. Highly expressed in white matter in the spinal cord, but not in dorsal root ganglia or sciatic nerve. Colocalizes with the oligodendrocyte marker CNP. Expressed in hippocampus in CA1, and to a lesser extent CA3 pyramidal cells. Also expressed in cortex, mostly in large neurons and in the large cerebellar Purkinje cells. As to expression, highly expressed in kidney, but not detected in brain.

The protein resides in the cell membrane. The protein localises to the basolateral cell membrane. The catalysed reaction is K(+)(in) + chloride(in) = K(+)(out) + chloride(out). Its activity is regulated as follows. Inhibited following phosphorylation by OXSR1/OSR1 and STK39/SPAK: phosphorylation takes place downstream of WNK kinases (WNK1, WNK2, WNK3 or WNK4) in response to hyperosmotic stress and subsequent cell shrinkage. Functionally, mediates electroneutral potassium-chloride cotransport when activated by cell swelling. May contribute to cell volume homeostasis in single cells. In terms of biological role, mediates electroneutral potassium-chloride cotransport when activated by cell swelling. May contribute to cell volume homeostasis in single cells. The chain is Solute carrier family 12 member 6 (Slc12a6) from Mus musculus (Mouse).